The sequence spans 952 residues: Protocadherin-20 (952 aa).

The signal sequence occupies residues 1–60; the sequence is MRGRGNARSLLVQAVSLRPATWHPCLDMGHLHRPSSRTSHRNLPHVFLLFLFVGPFNCLA. Residues 61 to 891 are Extracellular-facing; that stretch reads SYSRATELLY…VESMSCMPTL (831 aa). 6 consecutive Cadherin domains span residues 64 to 210, 211 to 321, 322 to 536, 537 to 640, 641 to 743, and 747 to 864; these read RATE…APQF, PISE…CPLF, IDSQ…APVF, LQPL…SPRF, INKD…PPLV, and QSNM…EPEI. N-linked (GlcNAc...) asparagine glycosylation occurs at N135. 2 N-linked (GlcNAc...) asparagine glycosylation sites follow: N327 and N333. N681, N749, N804, N845, and N850 each carry an N-linked (GlcNAc...) asparagine glycan. The chain crosses the membrane as a helical span at residues 892–912; sequence VALSVISLGSITLVTGMGIYI. Over 913-952 the chain is Cytoplasmic; the sequence is CLRKGKKHHREDDNLEVQIPLKGKIDLCMRERKPVDISNI.

Its subcellular location is the cell membrane. Functionally, potential calcium-dependent cell-adhesion protein. This is Protocadherin-20 (Pcdh20) from Mus musculus (Mouse).